The primary structure comprises 102 residues: Small ribosomal subunit protein uS10 (102 aa).

The protein belongs to the universal ribosomal protein uS10 family. Part of the 30S ribosomal subunit.

In terms of biological role, involved in the binding of tRNA to the ribosomes. The chain is Small ribosomal subunit protein uS10 from Symbiobacterium thermophilum (strain DSM 24528 / JCM 14929 / IAM 14863 / T).